Consider the following 468-residue polypeptide: Glutamate--tRNA ligase (468 aa).

The 'HIGH' region signature appears at 12 to 22 (PSPTGMMHIGT). The short motif at 238 to 242 (KLSKR) is the 'KMSKS' region element. Lysine 241 contacts ATP.

Belongs to the class-I aminoacyl-tRNA synthetase family. Glutamate--tRNA ligase type 1 subfamily. In terms of assembly, monomer.

The protein localises to the cytoplasm. The enzyme catalyses tRNA(Glu) + L-glutamate + ATP = L-glutamyl-tRNA(Glu) + AMP + diphosphate. In terms of biological role, catalyzes the attachment of glutamate to tRNA(Glu) in a two-step reaction: glutamate is first activated by ATP to form Glu-AMP and then transferred to the acceptor end of tRNA(Glu). The sequence is that of Glutamate--tRNA ligase from Phenylobacterium zucineum (strain HLK1).